A 515-amino-acid chain; its full sequence is FAD-dependent oxidoreductase domain-containing protein 1 homolog (515 aa).

The tract at residues 18–37 (AGATSNGSGSSGGDKSGEDL) is disordered. A helical membrane pass occupies residues 100–116 (VLIIGGGGVGSSIAYWL).

In terms of assembly, associates with mitochondrial complex I assembly intermediates during its biogenesis. Requires FAD as cofactor.

It is found in the mitochondrion inner membrane. Functionally, involved in the assembly of the mitochondrial membrane respiratory chain NADH dehydrogenase (Complex I). In Drosophila melanogaster (Fruit fly), this protein is FAD-dependent oxidoreductase domain-containing protein 1 homolog.